We begin with the raw amino-acid sequence, 83 residues long: MAAERPQNLQDTFLNFVRKNKVPLTIFLVNGVKLQGVVTWFDNFCVLLRRDGHSQLVYKHAISTIMPGQPIQMFESGEDAAAS.

In terms of domain architecture, Sm spans 11–71; sequence DTFLNFVRKN…ISTIMPGQPI (61 aa).

It belongs to the Hfq family. As to quaternary structure, homohexamer.

Functionally, RNA chaperone that binds small regulatory RNA (sRNAs) and mRNAs to facilitate mRNA translational regulation in response to envelope stress, environmental stress and changes in metabolite concentrations. Also binds with high specificity to tRNAs. The protein is RNA-binding protein Hfq of Methylocella silvestris (strain DSM 15510 / CIP 108128 / LMG 27833 / NCIMB 13906 / BL2).